The primary structure comprises 86 residues: Small ribosomal subunit protein bS16 (86 aa).

The protein belongs to the bacterial ribosomal protein bS16 family.

This Hamiltonella defensa subsp. Acyrthosiphon pisum (strain 5AT) protein is Small ribosomal subunit protein bS16.